Here is a 357-residue protein sequence, read N- to C-terminus: G-protein coupled receptor 183 (357 aa).

Topologically, residues 1-27 (MANNFTTPLATSHGNNCDLYAHHSTAR) are extracellular. N4 carries an N-linked (GlcNAc...) asparagine glycan. A helical membrane pass occupies residues 28–53 (VLMPLHYSLVFIIGLVGNLLALVVIV). At 54-73 (QNRKKINSTTLYSMNLVISD) the chain is on the cytoplasmic side. The helical transmembrane segment at 74–91 (ILFTTALPTRIAYYALGF) threads the bilayer. R83 is a 7alpha,25-dihydroxycholesterol binding site. At 92-101 (DWRIGDALCR) the chain is on the extracellular side. An intrachain disulfide couples C100 to C177. Residues 102–123 (VTALVFYINTYAGVNFMTCLSI) form a helical membrane-spanning segment. 7alpha,25-dihydroxycholesterol contacts are provided by Y108 and Y112. Residues 122–130 (SIDRFFAVV) form an interaction with G proteins region. The Cytoplasmic segment spans residues 124-145 (DRFFAVVHPLRYNKIKRIEYAK). The chain crosses the membrane as a helical span at residues 146–164 (GVCLSVWILVFAQTLPLLL). Over 165–188 (TPMSKEEGDKTTCMEYPNFEGTAS) the chain is Extracellular. The helical transmembrane segment at 189–211 (LPWILLGACLLGYVLPITVILLC) threads the bilayer. At 212 to 237 (YSQICCKLFRTAKQNPLTEKSGVNKK) the chain is on the cytoplasmic side. A helical membrane pass occupies residues 238 to 261 (ALNTIILIIVVFILCFTPYHVAII). Position 256 (Y256) interacts with 7alpha,25-dihydroxycholesterol. Residues 262 to 283 (QHMIKMLCSPGALECGARHSFQ) lie on the Extracellular side of the membrane. Residues 284–308 (ISLHFTVCLMNFNCCMDPFIYFFAC) traverse the membrane as a helical segment. The Cytoplasmic segment spans residues 309 to 357 (KGYKRKVMKMLKRQVSVSISSAVRSAPEENSREMTESQMMIHSKASNGR). 2 positions are modified to phosphoserine: S324 and S345. Positions 336 to 357 (EENSREMTESQMMIHSKASNGR) are disordered. A compositionally biased stretch (polar residues) spans 344–357 (ESQMMIHSKASNGR).

Belongs to the G-protein coupled receptor 1 family. Homodimer and heterodimer. Heterodimerizes with CXCR5; leading to modulate the interaction between of CXCL13 and CXCR5. In terms of tissue distribution, expressed in mature B-cells and increases in expression early after activation, before being down-regulated in germinal center B-cells. Expressed in astrocytes. Specifically expressed in CD4(+) dendritic cells but not in CD8(+) dendritic cells. Expressed in monocyte/osteoclasts precursors and mature osteoclasts.

Its subcellular location is the cell membrane. Functionally, G-protein coupled receptor expressed in lymphocytes that acts as a chemotactic receptor for B-cells, T-cells, splenic dendritic cells, monocytes/macrophages and astrocytes. Receptor for oxysterol 7-alpha,25-dihydroxycholesterol (7-alpha,25-OHC) and other related oxysterols. Mediates cell positioning and movement of a number of cells by binding the 7-alpha,25-OHC ligand that forms a chemotactic gradient. Binding of 7-alpha,25-OHC mediates the correct localization of B-cells during humoral immune responses. Collaborates with CXCR5 to mediate B-cell migration; probably by forming a heterodimer with CXCR5 that affects the interaction between of CXCL13 and CXCR5. Guides B-cell movement along the B-cell zone-T-cell zone boundary and later to interfollicular and outer follicular regions. Its specific expression during B-cell maturation helps position B-cells appropriately for mounting T-dependent antibody responses. Also acts as a chemotactic receptor for some T-cells upon binding to 7-alpha,25-OHC ligand. Promotes follicular helper T (Tfh) cells differentiation by positioning activated T-cells at the follicle-T-zone interface, promoting contact of newly activated CD4 T-cells with activated dendritic cells and exposing them to Tfh-cell-promoting inducible costimulator (ICOS) ligand. Expression in splenic dendritic cells is required for their homeostasis, localization and ability to induce B- and T-cell responses: GPR183 acts as a chemotactic receptor in dendritic cells that mediates the accumulation of CD4(+) dendritic cells in bridging channels. Regulates migration of astrocytes and is involved in communication between astrocytes and macrophages. Promotes osteoclast precursor migration to bone surfaces. Signals constitutively through G(i)-alpha, but not G(s)-alpha or G(q)-alpha. Signals constitutively also via MAPK1/3 (ERK1/2). This Mus musculus (Mouse) protein is G-protein coupled receptor 183.